The sequence spans 425 residues: UPF0597 protein Moth_1414 (425 aa).

The protein belongs to the UPF0597 family.

This is UPF0597 protein Moth_1414 from Moorella thermoacetica (strain ATCC 39073 / JCM 9320).